Consider the following 256-residue polypeptide: Imidazole glycerol phosphate synthase subunit HisF (256 aa).

Residues aspartate 12 and aspartate 131 contribute to the active site.

The protein belongs to the HisA/HisF family. In terms of assembly, heterodimer of HisH and HisF.

The protein resides in the cytoplasm. It carries out the reaction 5-[(5-phospho-1-deoxy-D-ribulos-1-ylimino)methylamino]-1-(5-phospho-beta-D-ribosyl)imidazole-4-carboxamide + L-glutamine = D-erythro-1-(imidazol-4-yl)glycerol 3-phosphate + 5-amino-1-(5-phospho-beta-D-ribosyl)imidazole-4-carboxamide + L-glutamate + H(+). Its pathway is amino-acid biosynthesis; L-histidine biosynthesis; L-histidine from 5-phospho-alpha-D-ribose 1-diphosphate: step 5/9. Functionally, IGPS catalyzes the conversion of PRFAR and glutamine to IGP, AICAR and glutamate. The HisF subunit catalyzes the cyclization activity that produces IGP and AICAR from PRFAR using the ammonia provided by the HisH subunit. The sequence is that of Imidazole glycerol phosphate synthase subunit HisF from Pseudomonas putida (strain ATCC 700007 / DSM 6899 / JCM 31910 / BCRC 17059 / LMG 24140 / F1).